The sequence spans 301 residues: N-acetylmuramic acid 6-phosphate etherase (301 aa).

Residues 57 to 220 form the SIS domain; sequence IAETFMKNGR…TTGAMIKTGK (164 aa). Glu-85 (proton donor) is an active-site residue. Residue Glu-116 is part of the active site.

This sequence belongs to the GCKR-like family. MurNAc-6-P etherase subfamily. As to quaternary structure, homodimer.

It catalyses the reaction N-acetyl-D-muramate 6-phosphate + H2O = N-acetyl-D-glucosamine 6-phosphate + (R)-lactate. It participates in amino-sugar metabolism; 1,6-anhydro-N-acetylmuramate degradation. Its pathway is amino-sugar metabolism; N-acetylmuramate degradation. The protein operates within cell wall biogenesis; peptidoglycan recycling. In terms of biological role, specifically catalyzes the cleavage of the D-lactyl ether substituent of MurNAc 6-phosphate, producing GlcNAc 6-phosphate and D-lactate. Together with AnmK, is also required for the utilization of anhydro-N-acetylmuramic acid (anhMurNAc) either imported from the medium or derived from its own cell wall murein, and thus plays a role in cell wall recycling. The protein is N-acetylmuramic acid 6-phosphate etherase of Pasteurella multocida (strain Pm70).